We begin with the raw amino-acid sequence, 313 residues long: Small glutamine-rich tetratricopeptide repeat-containing protein alpha (313 aa).

The interval 69–97 is disordered; that stretch reads KELPPDLRSPQETPPSEEDSAEAERLKTE. Phosphoserine is present on Ser-77. At Thr-81 the chain carries Phosphothreonine. Ser-84 carries the post-translational modification Phosphoserine. 3 TPR repeats span residues 91-124, 125-158, and 159-192; these read AERL…NPAN, AVYF…DPSY, and SKAY…DPDN. Position 137 is an N6-acetyllysine (Lys-137). The residue at position 301 (Ser-301) is a Phosphoserine. Position 303 is a phosphothreonine (Thr-303). Ser-305 bears the Phosphoserine mark.

This sequence belongs to the SGT family. Homodimer. Homooligomer. Interacts with DNAJC5 and DNAJC5B. Interacts (via TPR repeats) with HSP90AA1. Interacts (via Gln-rich region) with SLC2A1. Interacts with HSP90AB1. Interacts (via TPR repeats) with HSPA8/Hsc70; the interaction is direct. Interacts with BAG6 (via ubiquitin-like domain); interaction prevents interaction between BAG6 and RNF126. Forms a multiprotein complex, at least composed of DNAJB12, DNAJB14, HSPA8/Hsc70 and SGTA; interaction with DNAJB14 and HSPA8/Hsc70 is direct.

The protein resides in the cytoplasm. Its subcellular location is the nucleus. Co-chaperone that binds misfolded and hydrophobic patches-containing client proteins in the cytosol. Mediates their targeting to the endoplasmic reticulum but also regulates their sorting to the proteasome when targeting fails. Functions in tail-anchored/type II transmembrane proteins membrane insertion constituting with ASNA1 and the BAG6 complex a targeting module. Functions upstream of the BAG6 complex and ASNA1, binding more rapidly the transmembrane domain of newly synthesized proteins. It is also involved in the regulation of the endoplasmic reticulum-associated misfolded protein catabolic process via its interaction with BAG6: collaborates with the BAG6 complex to maintain hydrophobic substrates in non-ubiquitinated states. Competes with RNF126 for interaction with BAG6, preventing the ubiquitination of client proteins associated with the BAG6 complex. Binds directly to HSC70 and HSP70 and regulates their ATPase activity. This Bos taurus (Bovine) protein is Small glutamine-rich tetratricopeptide repeat-containing protein alpha (SGTA).